We begin with the raw amino-acid sequence, 48 residues long: Ribulose bisphosphate carboxylase large chain (48 aa).

This sequence belongs to the RuBisCO large chain family. Type I subfamily. In terms of assembly, heterohexadecamer of 8 large chains and 8 small chains.

The protein resides in the plastid. Its subcellular location is the chloroplast. It catalyses the reaction 2 (2R)-3-phosphoglycerate + 2 H(+) = D-ribulose 1,5-bisphosphate + CO2 + H2O. The catalysed reaction is D-ribulose 1,5-bisphosphate + O2 = 2-phosphoglycolate + (2R)-3-phosphoglycerate + 2 H(+). Functionally, ruBisCO catalyzes two reactions: the carboxylation of D-ribulose 1,5-bisphosphate, the primary event in carbon dioxide fixation, as well as the oxidative fragmentation of the pentose substrate in the photorespiration process. Both reactions occur simultaneously and in competition at the same active site. The protein is Ribulose bisphosphate carboxylase large chain (rbcL) of Pinus pinaster (Maritime pine).